The primary structure comprises 318 residues: Thymidylate synthase (318 aa).

DUMP contacts are provided by residues Arg-26 and 181-182; that span reads RR. Cys-201 acts as the Nucleophile in catalysis. Residues 221–224, Asn-232, and 262–264 each bind dUMP; these read RSAD and HIY. Asp-224 is a (6R)-5,10-methylene-5,6,7,8-tetrahydrofolate binding site. Residue Ala-317 coordinates (6R)-5,10-methylene-5,6,7,8-tetrahydrofolate.

The protein belongs to the thymidylate synthase family. Bacterial-type ThyA subfamily. In terms of assembly, homodimer.

It localises to the cytoplasm. It catalyses the reaction dUMP + (6R)-5,10-methylene-5,6,7,8-tetrahydrofolate = 7,8-dihydrofolate + dTMP. The protein operates within pyrimidine metabolism; dTTP biosynthesis. In terms of biological role, catalyzes the reductive methylation of 2'-deoxyuridine-5'-monophosphate (dUMP) to 2'-deoxythymidine-5'-monophosphate (dTMP) while utilizing 5,10-methylenetetrahydrofolate (mTHF) as the methyl donor and reductant in the reaction, yielding dihydrofolate (DHF) as a by-product. This enzymatic reaction provides an intracellular de novo source of dTMP, an essential precursor for DNA biosynthesis. In Staphylococcus haemolyticus (strain JCSC1435), this protein is Thymidylate synthase.